The primary structure comprises 357 residues: Alanine racemase (357 aa).

The active-site Proton acceptor; specific for D-alanine is lysine 35. Lysine 35 carries the post-translational modification N6-(pyridoxal phosphate)lysine. Arginine 131 serves as a coordination point for substrate. Residue tyrosine 256 is the Proton acceptor; specific for L-alanine of the active site. Methionine 304 is a substrate binding site.

The protein belongs to the alanine racemase family. Pyridoxal 5'-phosphate is required as a cofactor.

The enzyme catalyses L-alanine = D-alanine. Its pathway is amino-acid biosynthesis; D-alanine biosynthesis; D-alanine from L-alanine: step 1/1. Its function is as follows. Catalyzes the interconversion of L-alanine and D-alanine. May also act on other amino acids. This is Alanine racemase (alr) from Legionella pneumophila (strain Paris).